Here is a 274-residue protein sequence, read N- to C-terminus: Large ribosomal subunit protein uL2cz/uL2cy (274 aa).

A disordered region spans residues Asn-224–Ala-252.

It belongs to the universal ribosomal protein uL2 family. Part of the 50S ribosomal subunit.

The protein resides in the plastid. It localises to the chloroplast. The protein is Large ribosomal subunit protein uL2cz/uL2cy (rpl2-A) of Capsella bursa-pastoris (Shepherd's purse).